Consider the following 246-residue polypeptide: Pyridoxine 5'-phosphate synthase (246 aa).

3-amino-2-oxopropyl phosphate-binding residues include Asn-8 and Arg-19. His-44 serves as the catalytic Proton acceptor. Residues Arg-46 and His-51 each coordinate 1-deoxy-D-xylulose 5-phosphate. The Proton acceptor role is filled by Glu-76. Thr-106 is a binding site for 1-deoxy-D-xylulose 5-phosphate. His-198 (proton donor) is an active-site residue. 3-amino-2-oxopropyl phosphate contacts are provided by residues Asp-199 and 221 to 222 (GH).

Belongs to the PNP synthase family. As to quaternary structure, homooctamer; tetramer of dimers.

The protein localises to the cytoplasm. The catalysed reaction is 3-amino-2-oxopropyl phosphate + 1-deoxy-D-xylulose 5-phosphate = pyridoxine 5'-phosphate + phosphate + 2 H2O + H(+). It functions in the pathway cofactor biosynthesis; pyridoxine 5'-phosphate biosynthesis; pyridoxine 5'-phosphate from D-erythrose 4-phosphate: step 5/5. Functionally, catalyzes the complicated ring closure reaction between the two acyclic compounds 1-deoxy-D-xylulose-5-phosphate (DXP) and 3-amino-2-oxopropyl phosphate (1-amino-acetone-3-phosphate or AAP) to form pyridoxine 5'-phosphate (PNP) and inorganic phosphate. This is Pyridoxine 5'-phosphate synthase from Mesorhizobium japonicum (strain LMG 29417 / CECT 9101 / MAFF 303099) (Mesorhizobium loti (strain MAFF 303099)).